The chain runs to 210 residues: Methylthioribulose-1-phosphate dehydratase (210 aa).

Zn(2+) contacts are provided by His94 and His96.

Belongs to the aldolase class II family. MtnB subfamily. Zn(2+) serves as cofactor.

The enzyme catalyses 5-(methylsulfanyl)-D-ribulose 1-phosphate = 5-methylsulfanyl-2,3-dioxopentyl phosphate + H2O. It participates in amino-acid biosynthesis; L-methionine biosynthesis via salvage pathway; L-methionine from S-methyl-5-thio-alpha-D-ribose 1-phosphate: step 2/6. In terms of biological role, catalyzes the dehydration of methylthioribulose-1-phosphate (MTRu-1-P) into 2,3-diketo-5-methylthiopentyl-1-phosphate (DK-MTP-1-P). This Yersinia enterocolitica serotype O:8 / biotype 1B (strain NCTC 13174 / 8081) protein is Methylthioribulose-1-phosphate dehydratase.